An 84-amino-acid polypeptide reads, in one-letter code: Small ribosomal subunit protein bS18 (84 aa).

The protein belongs to the bacterial ribosomal protein bS18 family. As to quaternary structure, part of the 30S ribosomal subunit. Forms a tight heterodimer with protein bS6.

In terms of biological role, binds as a heterodimer with protein bS6 to the central domain of the 16S rRNA, where it helps stabilize the platform of the 30S subunit. In Mycoplasma mobile (strain ATCC 43663 / 163K / NCTC 11711) (Mesomycoplasma mobile), this protein is Small ribosomal subunit protein bS18.